The sequence spans 169 residues: Large ribosomal subunit protein uL5 (169 aa).

This sequence belongs to the universal ribosomal protein uL5 family. In terms of assembly, part of the 50S ribosomal subunit; contacts the 5S rRNA and probably tRNA. Forms a bridge to the 30S subunit in the 70S ribosome.

This is one of the proteins that bind and probably mediate the attachment of the 5S RNA into the large ribosomal subunit, where it forms part of the central protuberance. In the 70S ribosome it contacts protein S13 of the 30S subunit (bridge B1b), connecting the 2 subunits; this bridge is implicated in subunit movement. May contact the P site tRNA; the 5S rRNA and some of its associated proteins might help stabilize positioning of ribosome-bound tRNAs. The chain is Large ribosomal subunit protein uL5 from Cenarchaeum symbiosum (strain A).